A 93-amino-acid chain; its full sequence is Large ribosomal subunit protein uL23cz/uL23cy (93 aa).

It belongs to the universal ribosomal protein uL23 family. In terms of assembly, part of the 50S ribosomal subunit.

The protein localises to the plastid. It is found in the chloroplast. Its function is as follows. Binds to 23S rRNA. This is Large ribosomal subunit protein uL23cz/uL23cy (rpl23-A) from Atropa belladonna (Belladonna).